Consider the following 494-residue polypeptide: MLTSTSLYAAIDLGSNSFHMLVVREVAGSIQTLTRIKRKVRLAAGLNSDNSLSAEAMERGWQCLRLFAERLQDIPQPQICVVATATLRLAVNAGEFIAKAQEILGCPVQVISGEEEARLIYQGVAHTTGGADQRLVVDIGGASTELVTGTGAQTTSLFSLSMGCVTWLERYFTDRNLAQENFDEAEKAAREVLRPVADELRKHGWKVCVGASGTVQALQEIMMAQGMDERITLAKLQQLKQRAIHCGRLEELEIEGLTLERALVFPSGLAILIAIFTELDIQCMTLAGGALREGLVYGMLHLAVDQDIRSRTLRNIQRRFMVDTEQAHRVADLAVNFLDQVEDKWHLEPISRELLTSACQLHEIGLSVDFKQAPQHAAYLVRNLDLPGFTPAQKKLLATLLLNQTNPIDLSSLHQQNAVPPRVAEHLCRLLRLAIIFASRRRDDLVPQITLQAQDENLTLTLPQGWLEHHPLGKELIDQESQWQSYVHWPLDVH.

This sequence belongs to the GppA/Ppx family. GppA subfamily.

It catalyses the reaction guanosine 3'-diphosphate 5'-triphosphate + H2O = guanosine 3',5'-bis(diphosphate) + phosphate + H(+). The protein operates within purine metabolism; ppGpp biosynthesis; ppGpp from GTP: step 2/2. In terms of biological role, catalyzes the conversion of pppGpp to ppGpp. Guanosine pentaphosphate (pppGpp) is a cytoplasmic signaling molecule which together with ppGpp controls the 'stringent response', an adaptive process that allows bacteria to respond to amino acid starvation, resulting in the coordinated regulation of numerous cellular activities. The sequence is that of Guanosine-5'-triphosphate,3'-diphosphate pyrophosphatase from Citrobacter koseri (strain ATCC BAA-895 / CDC 4225-83 / SGSC4696).